Reading from the N-terminus, the 90-residue chain is Small ribosomal subunit protein bS16 (90 aa).

This sequence belongs to the bacterial ribosomal protein bS16 family.

The polypeptide is Small ribosomal subunit protein bS16 (Streptococcus pneumoniae (strain Hungary19A-6)).